A 549-amino-acid polypeptide reads, in one-letter code: Mitogen-activated protein kinase 15 (549 aa).

The interval 1–20 is ubiquitin-conjugating; it reads MCAAEVDRHVAQRYLIKRRL. Residues 14–305 form the Protein kinase domain; it reads YLIKRRLGKG…AEQALQHPYV (292 aa). ATP-binding positions include 20–28 and K43; that span reads LGKGAYGIV. D138 acts as the Proton acceptor in catalysis. At T176 the chain carries Phosphothreonine. A TXY motif is present at residues 176–178; that stretch reads TEY. The residue at position 178 (Y178) is a Phosphotyrosine. Positions 266–286 are necessary to interact with ESRRA, to regulate its subcellular localization and to inhibit its transcriptional activity; the sequence is LDALLPPDTPPEALDLLKRLL. A requires for interaction with GABARAP, MAP1LC3B AND GABARAPL1 region spans residues 301–382; it reads QHPYVQRFHC…ARTQSLKSGV (82 aa). The interval 370–507 is disordered; it reads ASPARTQSLK…PEPRPGRRMF (138 aa). 2 PXXXP motif repeats span residues 380–384 and 387–391; these read SGVLP and PAETP. 2 PXXXP motif; regulates binding with chromatin and interaction with PCNA repeats span residues 395–399 and 403–407; these read RGPKP and PGHDP. Residues 403–416 show a composition bias toward basic and acidic residues; it reads PGHDPEHVEVRRQS. R451 carries the omega-N-methylarginine modification. The span at 456–467 shows a compositional bias: polar residues; it reads SLTSQAEAQAAN. Low complexity predominate over residues 483-492; that stretch reads AVGARRVPSR. A compositionally biased stretch (basic and acidic residues) spans 493–502; the sequence is LPREAPEPRP.

Belongs to the protein kinase superfamily. CMGC Ser/Thr protein kinase family. MAP kinase subfamily. As to quaternary structure, interacts with TGFB1I1. Interacts with CSK/c-Src, ABL1 and RET. Interacts with GABARAP, MAP1LC3B and GABARAPL1; controls, in a kinase-dependent fashion, both basal and starvation-induced autophagy. Interacts with ESRRA; promotes re-localization of ESRRA to the cytoplasm through a XPO1-dependent mechanism then inhibits ESRRA transcriptional activity. Interacts with PCNA; the interaction is chromatin binding- and kinase activity-dependent and prevents MDM2-mediated PCNA destruction by inhibiting the association of PCNA with MDM2. Interacts with DVL2. Interacts with CLIC3; MAPK15 does not phosphorylates CLIC3. In terms of processing, autophosphorylated on Thr-176 and Tyr-178; activates the enzyme. Ubiquitinated. Ubiquitination may allow its tight kinase activity regulation and rapid turnover. May be ubiquitinated by a SCF E3 ligase. As to expression, expressed at all stages of oocyte meiotic maturation.

Its subcellular location is the cytoplasm. It localises to the cytoskeleton. The protein resides in the cilium basal body. It is found in the cell junction. The protein localises to the tight junction. Its subcellular location is the microtubule organizing center. It localises to the centrosome. The protein resides in the centriole. It is found in the cytoplasmic vesicle. The protein localises to the autophagosome. Its subcellular location is the golgi apparatus. It localises to the nucleus. The protein resides in the spindle. It catalyses the reaction L-seryl-[protein] + ATP = O-phospho-L-seryl-[protein] + ADP + H(+). The enzyme catalyses L-threonyl-[protein] + ATP = O-phospho-L-threonyl-[protein] + ADP + H(+). With respect to regulation, activated by threonine and tyrosine phosphorylation. Inhibited by dual specificity phosphatases, such as DUSP1. Phosphorylation and activation in response to DNA damaging agents, serum stimulation. Constitutively activated when phosphorylated on Tyr-178. Activity depends on the relative rates of MAPK15 autophosphorylation and dephosphorylation by PTPN1. Its function is as follows. Atypical MAPK protein that regulates several process such as autophagy, ciliogenesis, protein trafficking/secretion and genome integrity, in a kinase activity-dependent manner. Controls both, basal and starvation-induced autophagy throught its interaction with GABARAP, MAP1LC3B and GABARAPL1 leading to autophagosome formation, SQSTM1 degradation and reduced MAP1LC3B inhibitory phosphorylation. Regulates primary cilium formation and the localization of ciliary proteins involved in cilium structure, transport, and signaling. Prevents the relocation of the sugar-adding enzymes from the Golgi to the endoplasmic reticulum, thereby restricting the production of sugar-coated proteins. Upon amino-acid starvation, mediates transitional endoplasmic reticulum site disassembly and inhibition of secretion. Binds to chromatin leading to MAPK15 activation and interaction with PCNA, that which protects genomic integrity by inhibiting MDM2-mediated degradation of PCNA. Regulates DA transporter (DAT) activity and protein expression via activation of RhoA. In response to H(2)O(2) treatment phosphorylates ELAVL1, thus preventing it from binding to the PDCD4 3'UTR and rendering the PDCD4 mRNA accessible to miR-21 and leading to its degradation and loss of protein expression. Also functions in a kinase activity-independent manner as a negative regulator of growth. Phosphorylates in vitro FOS and MBP. During oocyte maturation, plays a key role in the microtubule organization and meiotic cell cycle progression in oocytes, fertilized eggs, and early embryos. Interacts with ESRRA promoting its re-localization from the nucleus to the cytoplasm and then prevents its transcriptional activity. This chain is Mitogen-activated protein kinase 15, found in Mus musculus (Mouse).